The sequence spans 471 residues: Uronate isomerase (471 aa).

This sequence belongs to the metallo-dependent hydrolases superfamily. Uronate isomerase family.

It carries out the reaction D-glucuronate = D-fructuronate. The catalysed reaction is aldehydo-D-galacturonate = keto-D-tagaturonate. It functions in the pathway carbohydrate metabolism; pentose and glucuronate interconversion. The protein is Uronate isomerase of Xanthomonas campestris pv. campestris (strain 8004).